A 131-amino-acid chain; its full sequence is Large ribosomal subunit protein bL19 (131 aa).

The protein belongs to the bacterial ribosomal protein bL19 family.

In terms of biological role, this protein is located at the 30S-50S ribosomal subunit interface and may play a role in the structure and function of the aminoacyl-tRNA binding site. The sequence is that of Large ribosomal subunit protein bL19 from Caulobacter sp. (strain K31).